The chain runs to 706 residues: Termination factor NPH-I homolog (706 aa).

The Helicase ATP-binding domain maps to 62–227; it reads IGQGENTRGL…VPCFNMLSGR (166 aa). 75–82 is an ATP binding site; that stretch reads HQMGMGKT. The DEAH box signature appears at 168–171; sequence DEAH. The 183-residue stretch at 417–599 folds into the Helicase C-terminal domain; it reads QCLQPLKVLE…HLNSAFRDLL (183 aa).

Belongs to the DEAD box helicase family. DEAH subfamily. As to quaternary structure, part of the viral DNA-directed RNA polymerase that consists of 8 polII-like subunits (RPB1, RPB2, RPB3, RPB5, RPB6, RPB7, RPB9, RPB10), a capping enzyme and a termination factor.

The protein localises to the virion. Putative DNA-dependent ATPase required for providing the needed energy to achieve the termination of early transcripts. The protein is Termination factor NPH-I homolog of African swine fever virus (isolate Warthog/Namibia/Wart80/1980) (ASFV).